We begin with the raw amino-acid sequence, 208 residues long: Na(+)-translocating NADH-quinone reductase subunit D (208 aa).

5 helical membrane passes run 42–62 (IVMG…ISLV), 72–92 (IIVQ…LLQA), 103–123 (VFVG…AFAM), 131–151 (LIDG…VATV), and 178–198 (NGLF…IWGL).

The protein belongs to the NqrDE/RnfAE family. As to quaternary structure, composed of six subunits; NqrA, NqrB, NqrC, NqrD, NqrE and NqrF.

The protein localises to the cell inner membrane. The catalysed reaction is a ubiquinone + n Na(+)(in) + NADH + H(+) = a ubiquinol + n Na(+)(out) + NAD(+). In terms of biological role, NQR complex catalyzes the reduction of ubiquinone-1 to ubiquinol by two successive reactions, coupled with the transport of Na(+) ions from the cytoplasm to the periplasm. NqrA to NqrE are probably involved in the second step, the conversion of ubisemiquinone to ubiquinol. The chain is Na(+)-translocating NADH-quinone reductase subunit D from Neisseria meningitidis serogroup B (strain ATCC BAA-335 / MC58).